A 227-amino-acid chain; its full sequence is Cytochrome c oxidase subunit 2 (227 aa).

Residues 1-14 (MAYPMQLGLQDATS) are Mitochondrial intermembrane-facing. A helical transmembrane segment spans residues 15 to 45 (PIMEELMNFHDHTLMIVFLISSLVLYLISLM). Residues 46–59 (LTTKLIHTNTMDAQ) are Mitochondrial matrix-facing. A helical transmembrane segment spans residues 60-87 (EVETIWTILPAIILVLIALPSLRILYMM). Residues 88 to 227 (DEINNPVLTV…FFENWSSSMT (140 aa)) are Mitochondrial intermembrane-facing. 6 residues coordinate Cu cation: His161, Cys196, Glu198, Cys200, His204, and Met207. Mg(2+) is bound at residue Glu198.

It belongs to the cytochrome c oxidase subunit 2 family. In terms of assembly, component of the cytochrome c oxidase (complex IV, CIV), a multisubunit enzyme composed of 14 subunits. The complex is composed of a catalytic core of 3 subunits MT-CO1, MT-CO2 and MT-CO3, encoded in the mitochondrial DNA, and 11 supernumerary subunits COX4I, COX5A, COX5B, COX6A, COX6B, COX6C, COX7A, COX7B, COX7C, COX8 and NDUFA4, which are encoded in the nuclear genome. The complex exists as a monomer or a dimer and forms supercomplexes (SCs) in the inner mitochondrial membrane with NADH-ubiquinone oxidoreductase (complex I, CI) and ubiquinol-cytochrome c oxidoreductase (cytochrome b-c1 complex, complex III, CIII), resulting in different assemblies (supercomplex SCI(1)III(2)IV(1) and megacomplex MCI(2)III(2)IV(2)). Found in a complex with TMEM177, COA6, COX18, COX20, SCO1 and SCO2. Interacts with TMEM177 in a COX20-dependent manner. Interacts with COX20. Interacts with COX16. Requires Cu cation as cofactor.

It localises to the mitochondrion inner membrane. It catalyses the reaction 4 Fe(II)-[cytochrome c] + O2 + 8 H(+)(in) = 4 Fe(III)-[cytochrome c] + 2 H2O + 4 H(+)(out). Component of the cytochrome c oxidase, the last enzyme in the mitochondrial electron transport chain which drives oxidative phosphorylation. The respiratory chain contains 3 multisubunit complexes succinate dehydrogenase (complex II, CII), ubiquinol-cytochrome c oxidoreductase (cytochrome b-c1 complex, complex III, CIII) and cytochrome c oxidase (complex IV, CIV), that cooperate to transfer electrons derived from NADH and succinate to molecular oxygen, creating an electrochemical gradient over the inner membrane that drives transmembrane transport and the ATP synthase. Cytochrome c oxidase is the component of the respiratory chain that catalyzes the reduction of oxygen to water. Electrons originating from reduced cytochrome c in the intermembrane space (IMS) are transferred via the dinuclear copper A center (CU(A)) of subunit 2 and heme A of subunit 1 to the active site in subunit 1, a binuclear center (BNC) formed by heme A3 and copper B (CU(B)). The BNC reduces molecular oxygen to 2 water molecules using 4 electrons from cytochrome c in the IMS and 4 protons from the mitochondrial matrix. In Desmodillus auricularis (Cape short-eared gerbil), this protein is Cytochrome c oxidase subunit 2 (MT-CO2).